Here is a 289-residue protein sequence, read N- to C-terminus: MGRPPCCDKAGVKKGPWTPEEDIVLVSYVQEHGPGNWRAVPVSTGLMRCSKSCRLRWTNYLRPGIRRGNFTPHEEGIIVHLQALLGNRWAAIASYLPQRTDNDIKNYWNTHLKKKLRKQQAIGAIFAPPRPSEPTAGHADCRRHDMTRSSKDSHAACPADSTPAADEVVTQLIAQQFAATDGDTSSSSSYSYASSTDNISKLLNGFMMKSASPARDDATDTIKTSSAIDIDPFDHKSGGAALPPPKKRQQQQHLSSIENWLFDDATEQLVVQLMEEISGGSCSVPMLLY.

HTH myb-type domains are found at residues 9–61 (KAGV…TNYL) and 62–116 (RPGI…KKKL). DNA-binding regions (H-T-H motif) lie at residues 37–61 (WRAV…TNYL) and 89–112 (WAAI…NTHL). Disordered stretches follow at residues 127 to 162 (APPR…ADST) and 225 to 252 (SSAI…QQQQ). Positions 139 to 154 (ADCRRHDMTRSSKDSH) are enriched in basic and acidic residues.

As to expression, mainly expressed in highly lignified tissues such as vascular tissues.

The protein resides in the nucleus. Transcription factor that binds to the promoter of MYB31 and MYB42 and activates directly their expression, thus repressing lignin biosynthesis. This is MYB transcription factor 69 from Zea mays (Maize).